The chain runs to 506 residues: Deoxyguanosinetriphosphate triphosphohydrolase (506 aa).

Residues 66 to 274 (RLTHSLEVQQ…MEAADDISYC (209 aa)) enclose the HD domain.

The protein belongs to the dGTPase family. Type 1 subfamily. Homotetramer. The cofactor is Mg(2+).

It carries out the reaction dGTP + H2O = 2'-deoxyguanosine + triphosphate + H(+). Its function is as follows. dGTPase preferentially hydrolyzes dGTP over the other canonical NTPs. The chain is Deoxyguanosinetriphosphate triphosphohydrolase from Yersinia pseudotuberculosis serotype O:3 (strain YPIII).